Reading from the N-terminus, the 70-residue chain is NADH dehydrogenase [ubiquinone] 1 alpha subcomplex subunit 1 (70 aa).

The chain crosses the membrane as a helical span at residues 1 to 21; it reads MWFEILPGLAIMGVCLVIPGV.

It belongs to the complex I NDUFA1 subunit family. Complex I is composed of 45 different subunits.

It localises to the mitochondrion inner membrane. Its function is as follows. Accessory subunit of the mitochondrial membrane respiratory chain NADH dehydrogenase (Complex I), that is believed not to be involved in catalysis. Complex I functions in the transfer of electrons from NADH to the respiratory chain. The immediate electron acceptor for the enzyme is believed to be ubiquinone. In Mus musculus (Mouse), this protein is NADH dehydrogenase [ubiquinone] 1 alpha subcomplex subunit 1 (Ndufa1).